Here is a 604-residue protein sequence, read N- to C-terminus: Prostaglandin G/H synthase 2 (604 aa).

The N-terminal stretch at 1-17 (MLARALLLCAAVALSHA) is a signal peptide. One can recognise an EGF-like domain in the interval 18–55 (ANPCCSNPCQNRGVCMTMGFDQYKCDCTRTGFYGENCS). Disulfide bonds link C21–C32, C22–C145, C26–C42, and C44–C54. A glycan (N-linked (GlcNAc...) asparagine) is linked at N53. Residue R106 participates in substrate binding. Residue N130 is glycosylated (N-linked (GlcNAc...) asparagine). The active-site Proton acceptor is H193. Y341 lines the substrate pocket. The active-site For cyclooxygenase activity is the Y371. H374 lines the heme b pocket. N396 is a glycosylation site (N-linked (GlcNAc...) asparagine). At C526 the chain carries S-nitrosocysteine. C555 and C561 are joined by a disulfide. The residue at position 565 (S565) is an O-acetylserine. A glycan (N-linked (GlcNAc...) asparagine) is linked at N580.

It belongs to the prostaglandin G/H synthase family. Homodimer. The cofactor is heme b. S-nitrosylation by NOS2 (iNOS) activates enzyme activity. S-nitrosylation may take place on different Cys residues in addition to Cys-526. Post-translationally, acetylated at Ser-565 by SPHK1. During neuroinflammation, acetylation by SPHK1 promotes neuronal secretion of specialized preresolving mediators (SPMs), especially 15-R-lipoxin A4, which results in an increase of phagocytic microglia. Highest expression in kidney and urinary bladder.

It localises to the microsome membrane. It is found in the endoplasmic reticulum membrane. The protein resides in the nucleus inner membrane. Its subcellular location is the nucleus outer membrane. The catalysed reaction is (5Z,8Z,11Z,14Z)-eicosatetraenoate + AH2 + 2 O2 = prostaglandin H2 + A + H2O. The enzyme catalyses (5Z,8Z,11Z,14Z)-eicosatetraenoate + 2 O2 = prostaglandin G2. It catalyses the reaction prostaglandin G2 + AH2 = prostaglandin H2 + A + H2O. It carries out the reaction (5Z,8Z,11Z,14Z,17Z)-eicosapentaenoate + 2 O2 = prostaglandin G3. The catalysed reaction is prostaglandin G3 + AH2 = prostaglandin H3 + A + H2O. The enzyme catalyses (8Z,11Z,14Z)-eicosatrienoate + 2 O2 = prostaglandin G1. It catalyses the reaction prostaglandin G1 + AH2 = prostaglandin H1 + A + H2O. It carries out the reaction 2-(5Z,8Z,11Z,14Z)-eicosatetraenoyl-sn-glycero-3-phosphoethanolamine + 2 O2 = 2-(prostaglandin G2)-sn-glycero-3-phosphoethanolamine. The catalysed reaction is 2-(prostaglandin G2)-sn-glycero-3-phosphoethanolamine + AH2 = 2-(prostaglandin H2)-sn-glycero-3-phosphoethanolamine + A + H2O. The enzyme catalyses 2-(5Z,8Z,11Z,14Z)-eicosatetraenoyl-sn-glycero-3-phosphocholine + 2 O2 = 2-(prostaglandin G2)-sn-glycero-3-phosphocholine. It catalyses the reaction 2-(prostaglandin G2)-sn-glycero-3-phosphocholine + AH2 = 2-(prostaglandin H2)-sn-glycero-3-phosphocholine + A + H2O. It carries out the reaction (15S)-hydroperoxy-(5Z,8Z,11Z,13E)-eicosatetraenoate + AH2 = (15S)-hydroxy-(5Z,8Z,11Z,13E)-eicosatetraenoate + A + H2O. The catalysed reaction is 2-(5Z,8Z,11Z,14Z)-eicosatetraenoyl-sn-glycero-3-phosphocholine + AH2 + O2 = 2-[(15S)-hydroxy-(5Z,8Z,11Z,13E)-eicosatetraenoyl]-sn-glycero-3-phosphocholine + A + H2O. The enzyme catalyses 2-(5Z,8Z,11Z,14Z)-eicosatetraenoyl-sn-glycero-3-phosphocholine + AH2 + O2 = 2-[(15R)-hydroxy-(5Z,8Z,11Z,13E)-eicosatetraenoyl]-sn-glycero-3-phosphocholine + A + H2O. It catalyses the reaction 2-(5Z,8Z,11Z,14Z)-eicosatetraenoyl-sn-glycero-3-phosphocholine + AH2 + O2 = 2-[(11R)-hydroxy-(5Z,8Z,12E,14Z)-eicosatetraenoyl]-sn-glycero-3-phosphocholine + A + H2O. It carries out the reaction (9Z,12Z)-octadecadienoate + AH2 + O2 = 9-hydroxy-(10E,12Z)-octadecadienoate + A + H2O. The catalysed reaction is (9Z,12Z)-octadecadienoate + AH2 + O2 = 13-hydroxy-(9Z,11E)-octadecadienoate + A + H2O. The enzyme catalyses (5Z,8Z,11Z,14Z)-eicosatetraenoate + AH2 + O2 = (15R)-hydroxy-(5Z,8Z,11Z,13E)-eicosatetraenoate + A + H2O. It catalyses the reaction (5Z,8Z,11Z,14Z)-eicosatetraenoate + AH2 + O2 = (11R)-hydroxy-(5Z,8Z,12E,14Z)-eicosatetraenoate + A + H2O. It carries out the reaction (5Z,8Z,11Z,14Z,17Z)-eicosapentaenoate + AH2 + O2 = (11R)-hydroxy-(5Z,8Z,12E,14Z,17Z)-eicosapentaenoate + A + H2O. The catalysed reaction is (5Z,8Z,11Z,14Z,17Z)-eicosapentaenoate + AH2 + O2 = (18S)-hydroxy-(5Z,8Z,11Z,14Z,16E)-eicosapentaenoate + A + H2O. The enzyme catalyses (5Z,8Z,11Z,14Z,17Z)-eicosapentaenoate + AH2 + O2 = (18R)-hydroxy-(5Z,8Z,11Z,14Z,16E)-eicosapentaenoate + A + H2O. It catalyses the reaction (5Z,8Z,11Z,14Z,17Z)-eicosapentaenoate + AH2 + O2 = (15R)-hydroxy-(5Z,8Z,11Z,13E,17Z)-eicosapentaenoate + A + H2O. It carries out the reaction (5Z,8Z,11Z,14Z,17Z)-eicosapentaenoate + AH2 + O2 = (15S)-hydroxy-(5Z,8Z,11Z,13E,17Z)-eicosapentaenoate + A + H2O. The catalysed reaction is (7Z,10Z,13Z,16Z,19Z)-docosapentaenoate + AH2 + O2 = 13R-hydroxy-(7Z,10Z,14E,16Z,19Z)-docosapentaenoate + A + H2O. The enzyme catalyses (4Z,7Z,10Z,13Z,16Z,19Z)-docosahexaenoate + AH2 + O2 = 13-hydroxy-(4Z,7Z,10Z,14E,16Z,19Z)-docosahexaenoate + A + H2O. It catalyses the reaction (5S)-hydroxy-(6E,8Z,11Z,14Z)-eicosatetraenoate + AH2 + O2 = (5S,15R)-dihydroxy-(6E,8Z,11Z,13E)-eicosatetraenoate + A + H2O. It carries out the reaction (4Z,7Z,10Z,13Z,16Z,19Z)-docosahexaenoate + AH2 + O2 = 17R-hydroxy-(4Z,7Z,10Z,13Z,15E,19Z)-docosahexaenoate + A + H2O. The catalysed reaction is (5S)-hydroxy-(6E,8Z,11Z,14Z)-eicosatetraenoate + AH2 + O2 = (5S,15S)-dihydroxy-(6E,8Z,11Z,13E)-eicosatetraenoate + A + H2O. The enzyme catalyses (5S)-hydroxy-(6E,8Z,11Z,14Z)-eicosatetraenoate + AH2 + O2 = (5S,11R)-dihydroxy-(6E,8Z,12E,14Z)-eicosatetraenoate + A + H2O. It catalyses the reaction 2-(5Z,8Z,11Z,14Z-eicosatetraenoyl)-glycerol + 2 O2 = 2-glyceryl-prostaglandin G2. It carries out the reaction 2-glyceryl-prostaglandin G2 + AH2 = 2-glyceryl-prostaglandin H2 + A + H2O. The catalysed reaction is (5Z,8Z,11Z,14Z)-eicosatetraenoate + O2 = (15R)-hydroperoxy-(5Z,8Z,11Z,13E)-eicosatetraenoate. The enzyme catalyses (5Z,8Z,11Z,14Z)-eicosatetraenoate + O2 = 11R-hydroperoxy-(5Z,8Z,12E,14Z)-eicosatetraenoate. It catalyses the reaction (9Z,12Z)-octadecadienoate + AH2 + O2 = (9R)-hydroxy-(10E,12Z)-octadecadienoate + A + H2O. It carries out the reaction (9Z,12Z)-octadecadienoate + AH2 + O2 = (9S)-hydroxy-(10E,12Z)-octadecadienoate + A + H2O. The catalysed reaction is (9Z,12Z)-octadecadienoate + AH2 + O2 = (13S)-hydroxy-(9Z,11E)-octadecadienoate + A + H2O. The enzyme catalyses (9Z,12Z)-octadecadienoate + AH2 + O2 = (13R)-hydroxy-(9Z,11E)-octadecadienoate + A + H2O. Its pathway is lipid metabolism; prostaglandin biosynthesis. Its function is as follows. Dual cyclooxygenase and peroxidase in the biosynthesis pathway of prostanoids, a class of C20 oxylipins mainly derived from arachidonate ((5Z,8Z,11Z,14Z)-eicosatetraenoate, AA, C20:4(n-6)), with a particular role in the inflammatory response. The cyclooxygenase activity oxygenates AA to the hydroperoxy endoperoxide prostaglandin G2 (PGG2), and the peroxidase activity reduces PGG2 to the hydroxy endoperoxide prostaglandin H2 (PGH2), the precursor of all 2-series prostaglandins and thromboxanes. This complex transformation is initiated by abstraction of hydrogen at carbon 13 (with S-stereochemistry), followed by insertion of molecular O2 to form the endoperoxide bridge between carbon 9 and 11 that defines prostaglandins. The insertion of a second molecule of O2 (bis-oxygenase activity) yields a hydroperoxy group in PGG2 that is then reduced to PGH2 by two electrons. Similarly catalyzes successive cyclooxygenation and peroxidation of dihomo-gamma-linoleate (DGLA, C20:3(n-6)) and eicosapentaenoate (EPA, C20:5(n-3)) to corresponding PGH1 and PGH3, the precursors of 1- and 3-series prostaglandins. In an alternative pathway of prostanoid biosynthesis, converts 2-arachidonoyl lysophopholipids to prostanoid lysophopholipids, which are then hydrolyzed by intracellular phospholipases to release free prostanoids. Metabolizes 2-arachidonoyl glycerol yielding the glyceryl ester of PGH2, a process that can contribute to pain response. Generates lipid mediators from n-3 and n-6 polyunsaturated fatty acids (PUFAs) via a lipoxygenase-type mechanism. Oxygenates PUFAs to hydroperoxy compounds and then reduces them to corresponding alcohols. Plays a role in the generation of resolution phase interaction products (resolvins) during both sterile and infectious inflammation. Metabolizes docosahexaenoate (DHA, C22:6(n-3)) to 17R-HDHA, a precursor of the D-series resolvins (RvDs). As a component of the biosynthetic pathway of E-series resolvins (RvEs), converts eicosapentaenoate (EPA, C20:5(n-3)) primarily to 18S-HEPE that is further metabolized by ALOX5 and LTA4H to generate 18S-RvE1 and 18S-RvE2. In vascular endothelial cells, converts docosapentaenoate (DPA, C22:5(n-3)) to 13R-HDPA, a precursor for 13-series resolvins (RvTs) shown to activate macrophage phagocytosis during bacterial infection. In activated leukocytes, contributes to oxygenation of hydroxyeicosatetraenoates (HETE) to diHETES (5,15-diHETE and 5,11-diHETE). Can also use linoleate (LA, (9Z,12Z)-octadecadienoate, C18:2(n-6)) as substrate and produce hydroxyoctadecadienoates (HODEs) in a regio- and stereospecific manner,being (9R)-HODE ((9R)-hydroxy-(10E,12Z)-octadecadienoate) and (13S)-HODE ((13S)-hydroxy-(9Z,11E)-octadecadienoate) its major products. During neuroinflammation, plays a role in neuronal secretion of specialized preresolving mediators (SPMs) 15R-lipoxin A4 that regulates phagocytic microglia. The polypeptide is Prostaglandin G/H synthase 2 (PTGS2) (Oryctolagus cuniculus (Rabbit)).